Here is an 820-residue protein sequence, read N- to C-terminus: Leucine--tRNA ligase (820 aa).

A 'HIGH' region motif is present at residues 40 to 51; that stretch reads PYPSGAGLHVGH. Residues 601 to 605 carry the 'KMSKS' region motif; the sequence is KMSKS. Residue Lys-604 participates in ATP binding.

It belongs to the class-I aminoacyl-tRNA synthetase family.

It localises to the cytoplasm. The catalysed reaction is tRNA(Leu) + L-leucine + ATP = L-leucyl-tRNA(Leu) + AMP + diphosphate. In Chlamydia caviae (strain ATCC VR-813 / DSM 19441 / 03DC25 / GPIC) (Chlamydophila caviae), this protein is Leucine--tRNA ligase.